The primary structure comprises 211 residues: Suppressor of cytokine signaling 1 (211 aa).

The segment at M1–T53 is disordered. Residues P25–A35 are compositionally biased toward low complexity. A compositionally biased stretch (pro residues) spans P36–A49. Positions F55–R66 are kinase inhibitory region (KIR). Positions I67–G78 are extended SH2 subdomain (ESS). The SH2 domain occupies F79–L174. In terms of domain architecture, SOCS box spans M161 to Q210. The interaction with Elongin BC complex stretch occupies residues P173–I182.

It belongs to the SOCS1 family. As to quaternary structure, interacts with multiple activated signaling proteins of the tyrosine kinase signaling pathway including JAK family kinases, TEC, KIT, GRB2 and VAV. Binding to JAKs is mediated through the KIR and SH2 domains to a phosphorylated tyrosine residue within the JAK JH1 domain. Binds the SH3 domain of GRB2 via diproline determinants in the N-terminus, and the N-terminal regulatory domain of VAV. Interacts with the Elongin BC complex (ELOB and ELOC). Component of an ECS CBC(SOCS1) E3 ubiquitin-protein ligase complex which contains Elongin BC, CUL5, RBX1 and SOCS1. Interacts (via SH2 domain and SOCS box) with TRIM8. Interacts with AXL, CUL2 and FGFR3. Interacts with INSR. Interacts with TRIM8. Interacts with DCUN1D1. Interacts with IFNGR1. Expressed in all tissues with high expression in spleen, small intestine and peripheral blood leukocytes.

The protein resides in the nucleus. The protein localises to the cytoplasmic vesicle. The protein operates within protein modification; protein ubiquitination. In terms of biological role, essential negative regulator of type I and type II interferon (IFN) signaling, as well as that of other cytokines, including IL2, IL4, IL6 and leukemia inhibitory factor (LIF). Downregulates cytokine signaling by inhibiting the JAK/STAT signaling pathway. Acts by binding to JAK proteins and to IFNGR1 and inhibiting their kinase activity. In vitro, suppresses Tec protein-tyrosine activity. Regulates IFN-gamma (IFNG)-mediated sensory neuron survival. Probable substrate recognition component of an ECS (Elongin BC-CUL2/5-SOCS-box protein) E3 ubiquitin ligase complex which mediates the ubiquitination and subsequent proteasomal degradation of target proteins. The polypeptide is Suppressor of cytokine signaling 1 (SOCS1) (Homo sapiens (Human)).